The following is a 418-amino-acid chain: Serine hydroxymethyltransferase (418 aa).

(6S)-5,6,7,8-tetrahydrofolate-binding positions include leucine 121 and glycine 125 to leucine 127. An N6-(pyridoxal phosphate)lysine modification is found at lysine 230. Residues glutamate 246 and serine 355–phenylalanine 357 contribute to the (6S)-5,6,7,8-tetrahydrofolate site.

This sequence belongs to the SHMT family. In terms of assembly, homodimer. Pyridoxal 5'-phosphate is required as a cofactor.

Its subcellular location is the cytoplasm. The catalysed reaction is (6R)-5,10-methylene-5,6,7,8-tetrahydrofolate + glycine + H2O = (6S)-5,6,7,8-tetrahydrofolate + L-serine. It participates in one-carbon metabolism; tetrahydrofolate interconversion. Its pathway is amino-acid biosynthesis; glycine biosynthesis; glycine from L-serine: step 1/1. Its function is as follows. Catalyzes the reversible interconversion of serine and glycine with tetrahydrofolate (THF) serving as the one-carbon carrier. This reaction serves as the major source of one-carbon groups required for the biosynthesis of purines, thymidylate, methionine, and other important biomolecules. Also exhibits THF-independent aldolase activity toward beta-hydroxyamino acids, producing glycine and aldehydes, via a retro-aldol mechanism. In Streptococcus pneumoniae (strain ATCC 700669 / Spain 23F-1), this protein is Serine hydroxymethyltransferase.